The sequence spans 169 residues: Nucleoside diphosphate kinase 3 (169 aa).

Positions 29, 105, 111, 122, 129, and 132 each coordinate ADP. His135 (pros-phosphohistidine intermediate) is an active-site residue.

The protein belongs to the NDK family. Homohexamer. Interacts (via its N-terminal region) with KAT5; this interaction enables recruitment of NME3 at DNA damage sites where it plays a role in the repair of DNA. Found in association with several ciliary nephronophthisis proteins, including NEK8, CEP164, ANKS6. The cofactor is Mg(2+).

The protein localises to the mitochondrion outer membrane. It is found in the cytoplasm. Its subcellular location is the cytoskeleton. The protein resides in the cilium basal body. It carries out the reaction a 2'-deoxyribonucleoside 5'-diphosphate + ATP = a 2'-deoxyribonucleoside 5'-triphosphate + ADP. The catalysed reaction is a ribonucleoside 5'-diphosphate + ATP = a ribonucleoside 5'-triphosphate + ADP. Functionally, catalyzes the phosphorylation of ribonucleosides and deoxyribonucleoside diphosphates, other than ATP, into the corresponding triphosphates with ATP as the major phosphate donor. The ATP gamma phosphate is transferred to the nucleoside diphosphate beta phosphate via a ping-pong mechanism, using a phosphorylated active-site intermediate. Through the catalyzed exchange of gamma-phosphate between di- and triphosphonucleosides participates in regulation of intracellular nucleotide homeostasis. Inhibits granulocyte differentiation. May be required for ciliary function during renal development. Its function is as follows. Independently of its kinase activity, facilitates mitochondrial tethering prior to membrane fusion through its direct membrane-binding and hexamerization. Implicated in repair of both single- and double-stranded breaks in DNA through its association with the ribonucleotide reductase complex (RNR complex) via its interaction with the histone acetyltransferase KAT5, this interaction enables recruitment of NME3 at DNA damage sites where it plays a role in the repair of DNA, independently of its kinase activity. This chain is Nucleoside diphosphate kinase 3 (Nme3), found in Mus musculus (Mouse).